A 266-amino-acid polypeptide reads, in one-letter code: Glucosamine-6-phosphate deaminase (266 aa).

Residue Asp72 is the Proton acceptor; for enolization step of the active site. The active-site For ring-opening step is the Asp141. His143 acts as the Proton acceptor; for ring-opening step in catalysis. The active-site For ring-opening step is the Glu148.

Belongs to the glucosamine/galactosamine-6-phosphate isomerase family. NagB subfamily. Homohexamer.

The enzyme catalyses alpha-D-glucosamine 6-phosphate + H2O = beta-D-fructose 6-phosphate + NH4(+). Its pathway is amino-sugar metabolism; N-acetylneuraminate degradation; D-fructose 6-phosphate from N-acetylneuraminate: step 5/5. Its activity is regulated as follows. Allosterically activated by N-acetylglucosamine 6-phosphate (GlcNAc6P). Catalyzes the reversible isomerization-deamination of glucosamine 6-phosphate (GlcN6P) to form fructose 6-phosphate (Fru6P) and ammonium ion. This Aeromonas hydrophila subsp. hydrophila (strain ATCC 7966 / DSM 30187 / BCRC 13018 / CCUG 14551 / JCM 1027 / KCTC 2358 / NCIMB 9240 / NCTC 8049) protein is Glucosamine-6-phosphate deaminase.